A 196-amino-acid chain; its full sequence is Kunitz trypsin inhibitor 5 (196 aa).

Residues 1 to 19 (MSSLLYIFLLLAVFISHRG) form the signal peptide. Cys156 and Cys167 form a disulfide bridge.

It belongs to the protease inhibitor I3 (leguminous Kunitz-type inhibitor) family.

It is found in the endoplasmic reticulum. Functionally, can inhibit both serine proteases and cysteine proteases. May be involved in the modulation of the proteases that participate in the hydrolysis of dietary proteins in the gut of spider mites. The polypeptide is Kunitz trypsin inhibitor 5 (Arabidopsis thaliana (Mouse-ear cress)).